Reading from the N-terminus, the 771-residue chain is MSSSRRRKSFTSSSSSSSPSFHSPPPTSRLRPRSPPSSNTKTSPTSTTPLATNILLSLIAFRLVNAFTVRTFFQPDEFFQSLEPAWQIAFGENQGAWITWEWRHQLRSSIHPLLFAAVYSAADVVAQLLRLSLASRADLLVAAPKTAQAVIAGLGDFYTWKLARYVYGARSYEAWATLALTVVSPWQWFCSTRTLSNCLETTITIVALYLWPWSWSFETPVRKKATRAASRERAQRGPEGSDSLQRLRQCLSLAAVACILRPTNILIWMGLASVAWFRTSWDRRAILVREVLLCGCAVLGLSCVVDRLFYGSWTFPPLRFLYFNIAQSLAVFYGRNDWHYYVSQGFPLLLTTALPFALVGLYRALAQVRTFGLGHLQSLVQAQLALICVIMPFVLSLVSHKEVRFIYPLLPSLHILSAPPLVDYFLPAVIRSSRSYTPRRLTLIFLLLVNIVIALYTTIYHASGPSNILSYLRQQHELHAPAAQTPSNLRPSVKDPSPHGITAGFLMPCHSTPWRSHLIYPTIHAWALTCEPPVDQTAAQKATYIDEADQFYANPARFLREHMAGGLRHISRKPSYLSAQPRPQHPSTTSTNDASHEWPDYLIFFAQLEPTLQSLLRASSYAECYRTFNTAWHDDWRRKGDIVAWCLDPAEQQAWRSATRQRDLENRERQFDRIIESFRKEASGKRDGKLSPFRRWFSSSSSVAPSSSLSLSWPTSWRWPWGQRKRTAWLGVQIPQWTRTRPSWTAWGGDWFGGWRQKKKTKKLLERDLWS.

Positions 1 to 47 are disordered; the sequence is MSSSRRRKSFTSSSSSSSPSFHSPPPTSRLRPRSPPSSNTKTSPTST. 2 stretches are compositionally biased toward low complexity: residues 10–21 and 36–47; these read FTSSSSSSSPSF and PSSNTKTSPTST. 7 consecutive transmembrane segments (helical) span residues 49 to 69, 251 to 271, 285 to 305, 341 to 361, 378 to 398, 410 to 430, and 441 to 461; these read PLAT…AFTV, LSLA…WMGL, AILV…SCVV, YVSQ…LVGL, SLVQ…LSLV, LPSL…PAVI, and LTLI…TIYH. The segment at 575 to 594 is disordered; the sequence is SYLSAQPRPQHPSTTSTNDA.

Belongs to the glycosyltransferase 22 family. PIGB subfamily.

It is found in the endoplasmic reticulum membrane. The protein operates within glycolipid biosynthesis; glycosylphosphatidylinositol-anchor biosynthesis. Mannosyltransferase involved in glycosylphosphatidylinositol-anchor biosynthesis. Transfers the third mannose to Man2-GlcN-acyl-PI during GPI precursor assembly. The sequence is that of GPI mannosyltransferase 3 (gpi10) from Aspergillus fumigatus (strain ATCC MYA-4609 / CBS 101355 / FGSC A1100 / Af293) (Neosartorya fumigata).